The primary structure comprises 735 residues: E3 UFM1-protein ligase 1 homolog (735 aa).

Residues 389–445 (RLEAEKKKQGGAKAAVKVQEETDDWGDGKKGGKGGKKNAKSVKGGSKSSAPSTSSNL) form a disordered region. Basic residues predominate over residues 419 to 428 (GGKGGKKNAK). Low complexity predominate over residues 429–445 (SVKGGSKSSAPSTSSNL).

This sequence belongs to the UFL1 family.

E3 UFM1-protein ligase that mediates ufmylation of target proteins. The sequence is that of E3 UFM1-protein ligase 1 homolog (ufl-1) from Caenorhabditis elegans.